The primary structure comprises 157 residues: Regenerating islet-derived protein 4 (157 aa).

A signal peptide spans 1–22; the sequence is MASKGVRLLLLLSWVAGPEVLS. The cysteines at positions 29 and 40 are disulfide-linked. In terms of domain architecture, C-type lectin spans 36–154; the sequence is YRSHCYGYFR…CANRQHFLCK (119 aa). N-linked (GlcNAc...) asparagine glycosylation is found at N49 and N62. Cystine bridges form between C57–C153 and C128–C145. A carbohydrate is bound by residues 97–102 and 134–136; these read DPQKKQ and KDK.

It is found in the secreted. Functionally, calcium-independent lectin displaying mannose-binding specificity and able to maintain carbohydrate recognition activity in an acidic environment. May be involved in inflammatory and metaplastic responses of the gastrointestinal epithelium. The sequence is that of Regenerating islet-derived protein 4 (Reg4) from Mus musculus (Mouse).